Consider the following 598-residue polypeptide: Arginine--tRNA ligase (598 aa).

Residues 135–145 (ANPTGPIHIGG) carry the 'HIGH' region motif. Residues 229–248 (VDGGTDEKGEPLGEGDSEQR) form a disordered region. Over residues 231–248 (GGTDEKGEPLGEGDSEQR) the composition is skewed to basic and acidic residues.

It belongs to the class-I aminoacyl-tRNA synthetase family. As to quaternary structure, monomer.

The protein resides in the cytoplasm. The enzyme catalyses tRNA(Arg) + L-arginine + ATP = L-arginyl-tRNA(Arg) + AMP + diphosphate. This is Arginine--tRNA ligase from Bifidobacterium animalis subsp. lactis (strain AD011).